Reading from the N-terminus, the 509-residue chain is MTVVTITPGAMSFADWRAIYEGASAALTVGAWDAIDASAAAVARIVAKGDPVYGINTGFGKLASVRIASDDLATLQRNIVLSHAAGTGAPSPTPVVRLMMALKLASFGVGASGVRRETAAMLEAMLARGLIPVVPSQGSVGASGDLAPLAHMAAAMIGVGKIDVGGAIMPAAEALAQAELTPLELGPKEGLALLNGTQFSTANALAGLFRAETLFRSALITGALSTEAAKGSDAPFDPRIHALRGHIGQREVGGALRTLMAGSAIRASHAIDDPRVQDPYCLRCQPQVMGAVLDLLRQAGATLGVEANGVSDNPLIFADSDEALSGGNFHAEPVAFAADMIAIALCEIGSIAERRIAMLVDPALSGLPAFLTPRPGLNSGFMIPQVTAAALVSENKQRAYPASVDSIPTSANQEDHVSMAAHGARRLLDMADNASAVIGIELLAACQGIDFHAPLKSSDALEAAHRHLRSHVPTLDDDRHFHPDMEAATALIRSGSLVAAVPASLPGVG.

A cross-link (5-imidazolinone (Ala-Gly)) is located at residues 142–144 (ASG). The residue at position 143 (serine 143) is a 2,3-didehydroalanine (Ser).

It belongs to the PAL/histidase family. Post-translationally, contains an active site 4-methylidene-imidazol-5-one (MIO), which is formed autocatalytically by cyclization and dehydration of residues Ala-Ser-Gly.

It is found in the cytoplasm. The catalysed reaction is L-histidine = trans-urocanate + NH4(+). The protein operates within amino-acid degradation; L-histidine degradation into L-glutamate; N-formimidoyl-L-glutamate from L-histidine: step 1/3. The chain is Histidine ammonia-lyase from Sphingopyxis alaskensis (strain DSM 13593 / LMG 18877 / RB2256) (Sphingomonas alaskensis).